Here is a 293-residue protein sequence, read N- to C-terminus: Bifunctional protein FolD (293 aa).

Residues 165 to 167 (GRS), Ser190, and Ile231 each bind NADP(+).

Belongs to the tetrahydrofolate dehydrogenase/cyclohydrolase family. Homodimer.

The enzyme catalyses (6R)-5,10-methylene-5,6,7,8-tetrahydrofolate + NADP(+) = (6R)-5,10-methenyltetrahydrofolate + NADPH. The catalysed reaction is (6R)-5,10-methenyltetrahydrofolate + H2O = (6R)-10-formyltetrahydrofolate + H(+). It participates in one-carbon metabolism; tetrahydrofolate interconversion. In terms of biological role, catalyzes the oxidation of 5,10-methylenetetrahydrofolate to 5,10-methenyltetrahydrofolate and then the hydrolysis of 5,10-methenyltetrahydrofolate to 10-formyltetrahydrofolate. The polypeptide is Bifunctional protein FolD (Synechococcus sp. (strain CC9902)).